Reading from the N-terminus, the 335-residue chain is Cytoplasmic envelopment protein 2 (335 aa).

It belongs to the herpesviridae cytoplasmic envelopment protein 2 family. In terms of assembly, interacts with cytoplasmic envelopment protein 3 and with the capsid.

It localises to the virion tegument. Its subcellular location is the host cytoplasm. The protein localises to the host nucleus. Its function is as follows. Plays a critical role in cytoplasmic virus egress. Participates in the final step of tegumentation and envelope acquisition within the host cytoplasm by directly interacting with the capsid. Upon virion binding to target cell, a signaling cascade is triggered to disrupt the interaction with the capsid, thereby preparing capsid uncoating. In Human herpesvirus 6A (strain Uganda-1102) (HHV-6 variant A), this protein is Cytoplasmic envelopment protein 2 (U65).